The sequence spans 57 residues: MSEFTVTGTFESRDGNQPFEKTVEAPNENVARDRAFAAFGSEHGLKRTQVEISEVAQ.

Residues 1–10 (MSEFTVTGTF) show a composition bias toward polar residues. The tract at residues 1-21 (MSEFTVTGTFESRDGNQPFEK) is disordered.

Belongs to the eukaryotic ribosomal protein eL20 family. Part of the 50S ribosomal subunit. Binds 23S rRNA.

The protein is Large ribosomal subunit protein eL20 of Halomicrobium mukohataei (strain ATCC 700874 / DSM 12286 / JCM 9738 / NCIMB 13541) (Haloarcula mukohataei).